The chain runs to 4903 residues: Histone-lysine N-methyltransferase 2C (4903 aa).

Disordered regions lie at residues 1–116 (MSSE…SEES) and 159–202 (LTLP…PPQQ). Residues 13-28 (QPPPAPPEEPGAPAPS) show a composition bias toward pro residues. 2 positions are modified to phosphoserine: serine 28 and serine 46. Residues 34–46 (KRPRGRPRKDGAS) constitute a DNA-binding region (a.T hook). Positions 50–59 (RARKKPRSRG) are enriched in basic residues. Over residues 64–81 (EDEDSMDGLETTETENIV) the composition is skewed to acidic residues. 2 positions are modified to phosphoserine: serine 89 and serine 113. Residues 101-116 (SKQPVSALQRSVSEES) are compositionally biased toward polar residues. The C2HC pre-PHD-type 1; degenerate zinc finger occupies 226–261 (ELSLVGLPDAIDVQALFDSTGTCWAHHRCVEWSLGI). PHD-type zinc fingers lie at residues 282–330 (ERCA…PEHI), 340–390 (DANC…CKVC), 387–437 (CKVC…CRIC), and 463–519 (DNLC…CKHL). The RING-type zinc finger occupies 343–388 (CAVCDSPGDLLDQFFCTTCGQHYHGMCLDIAVTPLKRAGWQCPECK). The DHHC domain maps to 435–488 (RICIECGTRSSTQWHHNCLICDTCYQQQDNLCPFCGKCYHPELQKDMLHCNMCK). The segment at 671–703 (SEVASKELSPPKSAPETAAPEALLSPHSERSLS) is disordered. Lysine 751 is subject to N6-acetyllysine. A compositionally biased stretch (basic residues) spans 824-835 (TKRKFSPGRPRS). 2 disordered regions span residues 824-857 (TKRK…DTSE) and 882-904 (GFPG…GRSK). The segment covering 838–848 (GAWSNHNTVSP) has biased composition (polar residues). Serine 847 carries the phosphoserine modification. PHD-type zinc fingers lie at residues 950–1003 (QDMC…CTVC), 1000–1050 (CTVC…CVWC), and 1077–1132 (LSSC…CRPY). The interval 1208-1318 (AVLQTPPDIQ…PSRDDGWREQ (111 aa)) is disordered. Residues 1217-1263 (QSEHSRDGEMDDSREGELMDCDGKSESSPEREAGDDETKGIEGTDAI) show a composition bias toward basic and acidic residues. At serine 1294 the chain carries Phosphoserine. The segment covering 1309–1318 (PSRDDGWREQ) has biased composition (basic and acidic residues). The stretch at 1330–1352 (VAENTDKIKKRYRKRKNKLEETF) forms a coiled coil. Disordered regions lie at residues 1397–1419 (SDPL…ADDP) and 1447–1473 (HSDI…RPLT). Polar residues-rich tracts occupy residues 1406 to 1415 (TSAKPGTQGT) and 1455 to 1471 (ADAS…SSRP). Lysine 1497 bears the N6-acetyllysine mark. Disordered regions lie at residues 1594–1617 (NAIA…ENDT) and 1698–1757 (VQMS…AKIE). Residues 1599–1617 (DPNSSWAPTTPSMEGENDT) are compositionally biased toward polar residues. A compositionally biased stretch (low complexity) spans 1707 to 1717 (RQQQQDSIDPS). Over residues 1718–1742 (SRIDSDLFKDPLKQRESEHEQEWKF) the composition is skewed to basic and acidic residues. Positions 1743–1790 (RQQMRQKSKQQAKIEATQKLEQVKNEQQQQQQQQQQQQQQQLASQHLL) form a coiled coil. Residue lysine 1761 is modified to N6-acetyllysine. The tract at residues 1791–2375 (VAPGSDTPSS…MSQADTEKLR (585 aa)) is disordered. A compositionally biased stretch (polar residues) spans 1796 to 1819 (DTPSSGAQSPLTPQAGNGNVSPAQ). Low complexity predominate over residues 1855–1886 (PSRIPVQESLSQSQNSQPPSPQMFSPGSSHSR). Phosphoserine is present on serine 1983. Residues 1986–2001 (ISEQSTKGPLTTGTSD) show a composition bias toward polar residues. At lysine 2005 the chain carries N6-acetyllysine. Composition is skewed to polar residues over residues 2113 to 2124 (GTISRSASQDPY), 2137 to 2151 (SYSQ…NPDP), and 2325 to 2334 (GNFSTSSNLP). Over residues 2335-2347 (VSSQGQQFSSVSQ) the composition is skewed to low complexity. Residues 2355–2369 (SGGTDTQNTVNMSQA) are compositionally biased toward polar residues. 2 positions are modified to asymmetric dimethylarginine: arginine 2447 and arginine 2563. Disordered regions lie at residues 2561 to 2668 (RSRL…DNLE), 2702 to 2736 (KDLD…NDPN), and 2786 to 2844 (VEPK…GDAD). Polar residues-rich tracts occupy residues 2602–2611 (QPSQCLSNQL), 2621–2636 (PPSQ…QSSI), and 2653–2668 (PLST…DNLE). Over residues 2788–2807 (PKTRDQGDKTMVLEDKDLPQ) the composition is skewed to basic and acidic residues. Lysine 2796 and lysine 2803 each carry N6-acetyllysine. A Phosphoserine modification is found at serine 2822. Tyrosine 2824 is modified (phosphotyrosine). Basic and acidic residues predominate over residues 2825 to 2843 (SKEEIQSEIKNHDDSRGDA). Lysine 2826 and lysine 2862 each carry N6-acetyllysine. The segment at 2920–2953 (EKCDDSDIRPSGSSPPSLPISPSTHGSSLPPTLI) is disordered. Over residues 2929-2942 (PSGSSPPSLPISPS) the composition is skewed to low complexity. Coiled coils occupy residues 3047–3074 (LLQD…QRSE) and 3166–3193 (NDSQ…YLEE). The span at 3198–3214 (HRKSKKALSAKQRTAKK) shows a compositional bias: basic residues. The disordered stretch occupies residues 3198–3223 (HRKSKKALSAKQRTAKKAGREFPEED). 2 coiled-coil regions span residues 3224-3270 (AEQL…QQCA) and 3387-3432 (FSES…QHCL). Disordered stretches follow at residues 3329 to 3407 (PGWQ…QERQ) and 3444 to 3910 (SQMP…QKMA). Residues 3391–3407 (FQERERKERLREQQERQ) are compositionally biased toward basic and acidic residues. The span at 3464–3485 (LQQSPQHQQQIGPVLQQQNVQQ) shows a compositional bias: low complexity. Polar residues-rich tracts occupy residues 3486 to 3503 (GSVN…NEQR), 3515 to 3524 (PSASGGSPNF), 3557 to 3586 (PVAN…SLIQ), and 3632 to 3647 (LSET…PSEL). Basic and acidic residues-rich tracts occupy residues 3697–3739 (AEAD…KIKD) and 3795–3804 (SSTKDGKLIE). Position 3709 is an N6-acetyllysine (lysine 3709). Over residues 3871–3885 (MYSSSDSFTHLKQQN) the composition is skewed to polar residues. The span at 3890–3904 (PPTPPASLPPTPPPM) shows a compositional bias: pro residues. A Phosphoserine modification is found at serine 4027. An Asymmetric dimethylarginine modification is found at arginine 4132. The segment at 4159-4184 (PNVPFPPTSNGLSGYKDSSHGPAEGA) is disordered. At serine 4260 the chain carries Phosphoserine. Residues 4391–4431 (CRKCCFCHEEGDGLTDGPARLLNLDLDLWVHLNCALWSTEV) form a C2HC pre-PHD-type 2 zinc finger. A PHD-type 8 zinc finger spans residues 4452–4499 (MKCVFCHKTGATSGCHRFRCTNIYHFTCATKAQCMFFKDKTMLCPMHK). Positions 4537–4597 (DHTFRVGSLI…CRYLCSIEEK (61 aa)) constitute an FYR N-terminal domain. The region spanning 4598 to 4683 (DGRPVFVIRI…EACENYTFRY (86 aa)) is the FYR C-terminal domain. The WDR5 interaction motif (WIN) signature appears at 4699–4704 (GCARSE). In terms of domain architecture, SET spans 4763 to 4879 (SNVYLARSRI…KGEELCYDYK (117 aa)). Residues tyrosine 4817 and 4840-4841 (NH) each bind S-adenosyl-L-methionine. Residues cysteine 4843, cysteine 4891, cysteine 4893, and cysteine 4898 each coordinate Zn(2+). The Post-SET domain occupies 4887–4903 (HKIPCHCGAVNCRKWMN).

The protein belongs to the class V-like SAM-binding methyltransferase superfamily. Histone-lysine methyltransferase family. TRX/MLL subfamily. In terms of assembly, component of the MLL3 complex (also named ASCOM complex), at least composed of catalytic subunit KMT2C/MLL3, ASH2L, RBBP5, WDR5, NCOA6, DPY30, KDM6A, PAXIP1/PTIP, PAGR1 and alpha- and beta-tubulin. Forms a core complex with the evolutionary conserved subcomplex WRAD composed of WDR5, RBBP5, ASH2L/ASH2 and DPY30 subunits; WRAD differentially stimulates the methyltransferase activity. Interacts (via WIN motif) with WDR5. As to expression, in adult, detected in testis, kidney, spleen and lung, weakly expressed in brain and absent in heart and liver. First detected throughout the embryo at 8 dpc when expression is strong in forebrain neuroepithelium and absent in heart. Expressed in the eye lens between 10 and 14.5 dpc. By 13 dpc, expressed strongly in spinal cord, hand/foot plates and gonads.

It is found in the nucleus. It catalyses the reaction L-lysyl(4)-[histone H3] + S-adenosyl-L-methionine = N(6)-methyl-L-lysyl(4)-[histone H3] + S-adenosyl-L-homocysteine + H(+). Functionally, histone methyltransferase that catalyzes methyl group transfer from S-adenosyl-L-methionine to the epsilon-amino group of 'Lys-4' of histone H3 (H3K4). Part of chromatin remodeling machinery predominantly forms H3K4me1 methylation marks at active chromatin sites where transcription and DNA repair take place. Likely plays a redundant role with KMT2D in enriching H3K4me1 mark on primed and active enhancer elements. This chain is Histone-lysine N-methyltransferase 2C (Kmt2c), found in Mus musculus (Mouse).